The sequence spans 288 residues: Hemin import ATP-binding protein HmuV (288 aa).

An ABC transporter domain is found at 31–269 (LRARGLVVER…DLLTRVYQHP (239 aa)). 68-75 (GPNGAGKS) lines the ATP pocket.

This sequence belongs to the ABC transporter superfamily. Heme (hemin) importer (TC 3.A.1.14.5) family. The complex is composed of two ATP-binding proteins (HmuV), two transmembrane proteins (HmuU) and a solute-binding protein (HmuT).

It is found in the cell membrane. Part of the ABC transporter complex HmuTUV involved in hemin import. Responsible for energy coupling to the transport system. The chain is Hemin import ATP-binding protein HmuV from Nocardia farcinica (strain IFM 10152).